The sequence spans 514 residues: Na(+)/H(+) antiporter NhaB (514 aa).

Helical transmembrane passes span 23–43 (LALI…PFVA), 63–83 (PLLP…TSAA), 97–117 (LLLM…LFIF), 120–140 (LLLS…AAAF), 144–164 (FLDA…FYGI), 202–222 (LMMH…VGEP), 238–258 (FFLR…FTCV), 303–323 (AIIG…VGLI), 357–377 (LTVF…APII), 391–411 (LFYL…VGTI), 447–467 (ATPN…APLI), and 475–495 (VWMA…CVEF).

This sequence belongs to the NhaB Na(+)/H(+) (TC 2.A.34) antiporter family.

It localises to the cell inner membrane. It catalyses the reaction 2 Na(+)(in) + 3 H(+)(out) = 2 Na(+)(out) + 3 H(+)(in). In terms of biological role, na(+)/H(+) antiporter that extrudes sodium in exchange for external protons. The polypeptide is Na(+)/H(+) antiporter NhaB (Citrobacter koseri (strain ATCC BAA-895 / CDC 4225-83 / SGSC4696)).